Consider the following 322-residue polypeptide: Cytochrome c biogenesis protein CcsA (322 aa).

Helical transmembrane passes span 6–26 (LQLI…FLFF), 45–65 (LIAN…AGYF), 69–89 (NLYE…LFLY), 97–117 (LLDN…HFIL), 144–164 (MISY…LYFL), 230–250 (LITF…VWAN), 265–285 (WALI…IKGW), and 291–311 (AMVA…VNLL).

It belongs to the CcmF/CycK/Ccl1/NrfE/CcsA family. May interact with Ccs1.

It localises to the plastid. The protein resides in the cyanelle thylakoid membrane. Functionally, required during biogenesis of c-type cytochromes (cytochrome c6 and cytochrome f) at the step of heme attachment. This Cyanophora paradoxa protein is Cytochrome c biogenesis protein CcsA.